A 546-amino-acid polypeptide reads, in one-letter code: Chaperonin GroEL 2 (546 aa).

Residues 30–33 (TLGP), lysine 51, 87–91 (DGTTT), glycine 415, and aspartate 496 contribute to the ATP site.

Belongs to the chaperonin (HSP60) family. As to quaternary structure, forms a cylinder of 14 subunits composed of two heptameric rings stacked back-to-back. Interacts with the co-chaperonin GroES.

Its subcellular location is the cytoplasm. It catalyses the reaction ATP + H2O + a folded polypeptide = ADP + phosphate + an unfolded polypeptide.. Functionally, together with its co-chaperonin GroES, plays an essential role in assisting protein folding. The GroEL-GroES system forms a nano-cage that allows encapsulation of the non-native substrate proteins and provides a physical environment optimized to promote and accelerate protein folding. The polypeptide is Chaperonin GroEL 2 (Bradyrhizobium sp. (strain ORS 278)).